The following is a 298-amino-acid chain: MAHPEQHYLDLLAQVLARGDRRVDRTGVGTLSLFGAMLRFDLSKGAAPILTTKKVYWKTAVKEMLWFLTGGTNIRPLLQQNVRIWTDWPLAAYRRATGEEIGQAEFEARIVADEGFAARWGDLGPVYGKQWRRWLGPDGREHDQIAGLIETLRTNPASRRMLFHAWNVAEVGQMALPPCHMVYQYHVTSDGRLNALLYQRSVDLLLGAPFNFVGAAALQLMIAQQADLLPGELVWVGGDTHLYLNHLEQAREQISRAPRDWPRMQLVRRAESIDDYRIEDFAVEGYESHPAIAAEVAV.

Residues arginine 25 and 159-160 (RR) contribute to the dUMP site. Residue cysteine 179 is the Nucleophile of the active site. DUMP is bound by residues 200 to 203 (RSVD), asparagine 211, and 241 to 243 (HLY). Residue aspartate 203 coordinates (6R)-5,10-methylene-5,6,7,8-tetrahydrofolate. Alanine 297 is a (6R)-5,10-methylene-5,6,7,8-tetrahydrofolate binding site.

The protein belongs to the thymidylate synthase family. Bacterial-type ThyA subfamily. Homodimer.

The protein resides in the cytoplasm. The catalysed reaction is dUMP + (6R)-5,10-methylene-5,6,7,8-tetrahydrofolate = 7,8-dihydrofolate + dTMP. Its pathway is pyrimidine metabolism; dTTP biosynthesis. In terms of biological role, catalyzes the reductive methylation of 2'-deoxyuridine-5'-monophosphate (dUMP) to 2'-deoxythymidine-5'-monophosphate (dTMP) while utilizing 5,10-methylenetetrahydrofolate (mTHF) as the methyl donor and reductant in the reaction, yielding dihydrofolate (DHF) as a by-product. This enzymatic reaction provides an intracellular de novo source of dTMP, an essential precursor for DNA biosynthesis. The chain is Thymidylate synthase from Cereibacter sphaeroides (strain ATCC 17025 / ATH 2.4.3) (Rhodobacter sphaeroides).